A 327-amino-acid chain; its full sequence is Lipoyl synthase (327 aa).

7 residues coordinate [4Fe-4S] cluster: C74, C79, C85, C100, C104, C107, and S314. The Radical SAM core domain occupies 86-303; it reads FSGGTATFMI…AEEGEKMGFK (218 aa).

It belongs to the radical SAM superfamily. Lipoyl synthase family. It depends on [4Fe-4S] cluster as a cofactor.

The protein localises to the cytoplasm. The catalysed reaction is [[Fe-S] cluster scaffold protein carrying a second [4Fe-4S](2+) cluster] + N(6)-octanoyl-L-lysyl-[protein] + 2 oxidized [2Fe-2S]-[ferredoxin] + 2 S-adenosyl-L-methionine + 4 H(+) = [[Fe-S] cluster scaffold protein] + N(6)-[(R)-dihydrolipoyl]-L-lysyl-[protein] + 4 Fe(3+) + 2 hydrogen sulfide + 2 5'-deoxyadenosine + 2 L-methionine + 2 reduced [2Fe-2S]-[ferredoxin]. The protein operates within protein modification; protein lipoylation via endogenous pathway; protein N(6)-(lipoyl)lysine from octanoyl-[acyl-carrier-protein]: step 2/2. Catalyzes the radical-mediated insertion of two sulfur atoms into the C-6 and C-8 positions of the octanoyl moiety bound to the lipoyl domains of lipoate-dependent enzymes, thereby converting the octanoylated domains into lipoylated derivatives. This is Lipoyl synthase from Pseudomonas aeruginosa (strain LESB58).